The sequence spans 549 residues: Glucose-6-phosphate isomerase (549 aa).

E352 (proton donor) is an active-site residue. Active-site residues include H383 and K511.

Belongs to the GPI family.

It is found in the cytoplasm. The enzyme catalyses alpha-D-glucose 6-phosphate = beta-D-fructose 6-phosphate. The protein operates within carbohydrate biosynthesis; gluconeogenesis. It participates in carbohydrate degradation; glycolysis; D-glyceraldehyde 3-phosphate and glycerone phosphate from D-glucose: step 2/4. Functionally, catalyzes the reversible isomerization of glucose-6-phosphate to fructose-6-phosphate. This is Glucose-6-phosphate isomerase from Methylocella silvestris (strain DSM 15510 / CIP 108128 / LMG 27833 / NCIMB 13906 / BL2).